Here is a 373-residue protein sequence, read N- to C-terminus: Peptide chain release factor subunit 1 (373 aa).

This sequence belongs to the eukaryotic release factor 1 family. In terms of assembly, heterodimer of two subunits, one of which binds GTP.

It localises to the cytoplasm. Functionally, directs the termination of nascent peptide synthesis (translation) in response to the termination codons UAA, UAG and UGA. This chain is Peptide chain release factor subunit 1 (prf1), found in Aeropyrum pernix (strain ATCC 700893 / DSM 11879 / JCM 9820 / NBRC 100138 / K1).